The following is a 64-amino-acid chain: MPKIKTHRGAAKRFKKTATGKIRGWHAFHSHILGKKTAKRKRNLRKSTIIHESDAVRISRLLPY.

Belongs to the bacterial ribosomal protein bL35 family.

The chain is Large ribosomal subunit protein bL35 from Desulforamulus reducens (strain ATCC BAA-1160 / DSM 100696 / MI-1) (Desulfotomaculum reducens).